The sequence spans 184 residues: Protein Syd (184 aa).

Belongs to the Syd family.

The protein localises to the cell inner membrane. Its function is as follows. Interacts with the SecY protein in vivo. May bind preferentially to an uncomplexed state of SecY, thus functioning either as a chelating agent for excess SecY in the cell or as a regulatory factor that negatively controls the translocase function. In Edwardsiella ictaluri (strain 93-146), this protein is Protein Syd.